A 303-amino-acid polypeptide reads, in one-letter code: Tyrosine recombinase XerC (303 aa).

Positions 3 to 89 (IQNDQWVSAF…TLRSFYQFLV (87 aa)) constitute a Core-binding (CB) domain. One can recognise a Tyr recombinase domain in the interval 110-297 (KLPSFLYEEE…TKDRLRDVYR (188 aa)). Active-site residues include Arg150, Lys174, His249, Arg252, and His275. Catalysis depends on Tyr284, which acts as the O-(3'-phospho-DNA)-tyrosine intermediate.

The protein belongs to the 'phage' integrase family. XerC subfamily. Forms a cyclic heterotetrameric complex composed of two molecules of XerC and two molecules of XerD.

It is found in the cytoplasm. Site-specific tyrosine recombinase, which acts by catalyzing the cutting and rejoining of the recombining DNA molecules. The XerC-XerD complex is essential to convert dimers of the bacterial chromosome into monomers to permit their segregation at cell division. It also contributes to the segregational stability of plasmids. In Halalkalibacterium halodurans (strain ATCC BAA-125 / DSM 18197 / FERM 7344 / JCM 9153 / C-125) (Bacillus halodurans), this protein is Tyrosine recombinase XerC.